The following is a 309-amino-acid chain: L-aminoadipate-semialdehyde dehydrogenase-phosphopantetheinyl transferase (309 aa).

CoA contacts are provided by residues R47, 86–91, and 108–111; these read RTSKGK and NISH. Residues D129 and E181 each contribute to the Mg(2+) site. 181 to 185 provides a ligand contact to CoA; sequence ESFIK.

The protein belongs to the P-Pant transferase superfamily. AcpS family. As to quaternary structure, monomer. Mg(2+) serves as cofactor.

The protein localises to the cytoplasm. The protein resides in the cytosol. It carries out the reaction apo-[ACP] + CoA = holo-[ACP] + adenosine 3',5'-bisphosphate + H(+). The catalysed reaction is apo-[ACP] + acetyl-CoA = acetyl-[ACP] + adenosine 3',5'-bisphosphate + H(+). Functionally, catalyzes the post-translational modification of target proteins by phosphopantetheine. Can transfer the 4'-phosphopantetheine moiety from coenzyme A, regardless of whether the CoA is presented in the free thiol form or as an acetyl thioester, to a serine residue of a broad range of acceptors including the acyl carrier domain of FASN. This Rattus norvegicus (Rat) protein is L-aminoadipate-semialdehyde dehydrogenase-phosphopantetheinyl transferase (Aasdhppt).